Consider the following 174-residue polypeptide: Shikimate kinase (174 aa).

An ATP-binding site is contributed by 15–20 (GTGKST). Ser-19 is a Mg(2+) binding site. The substrate site is built by Asp-37, Arg-61, and Gly-82. ATP is bound at residue Arg-120. Arg-138 is a binding site for substrate.

This sequence belongs to the shikimate kinase family. Monomer. The cofactor is Mg(2+).

The protein resides in the cytoplasm. The catalysed reaction is shikimate + ATP = 3-phosphoshikimate + ADP + H(+). The protein operates within metabolic intermediate biosynthesis; chorismate biosynthesis; chorismate from D-erythrose 4-phosphate and phosphoenolpyruvate: step 5/7. Functionally, catalyzes the specific phosphorylation of the 3-hydroxyl group of shikimic acid using ATP as a cosubstrate. The chain is Shikimate kinase from Staphylococcus aureus (strain MRSA252).